Here is a 230-residue protein sequence, read N- to C-terminus: Extracellular ribonuclease LE (230 aa).

The signal sequence occupies residues 1–25; that stretch reads MASNSAFSLFLILLIITQCLSVLNA. Residue Gln-37 coordinates RNA. Intrachain disulfides connect Cys-43/Cys-49, Cys-50/Cys-106, Cys-79/Cys-125, Cys-186/Cys-221, and Cys-202/Cys-213. RNA-binding positions include His-64, Phe-114, 117 to 118, and 121 to 122; these read HE and KH. The Proton donor role is filled by His-64. Glu-118 is a catalytic residue. Catalysis depends on His-122, which acts as the Proton acceptor.

It belongs to the RNase T2 family.

It localises to the secreted. The protein localises to the extracellular space. The protein resides in the cell wall. The catalysed reaction is a ribonucleotidyl-ribonucleotide-RNA + H2O = a 3'-end 3'-phospho-ribonucleotide-RNA + a 5'-end dephospho-ribonucleoside-RNA + H(+). In terms of biological role, probably involved in plant phosphate-starvation rescue system. The chain is Extracellular ribonuclease LE from Solanum lycopersicum (Tomato).